Here is a 211-residue protein sequence, read N- to C-terminus: tRNA (guanine-N(7)-)-methyltransferase (211 aa).

E44, D69, D96, and D118 together coordinate S-adenosyl-L-methionine. D118 is a catalytic residue. Residue K122 participates in substrate binding. Residues 124–129 are interaction with RNA; the sequence is RHEKRR. Substrate is bound by residues D154 and 191–194; that span reads TEYE.

It belongs to the class I-like SAM-binding methyltransferase superfamily. TrmB family.

The enzyme catalyses guanosine(46) in tRNA + S-adenosyl-L-methionine = N(7)-methylguanosine(46) in tRNA + S-adenosyl-L-homocysteine. Its pathway is tRNA modification; N(7)-methylguanine-tRNA biosynthesis. Catalyzes the formation of N(7)-methylguanine at position 46 (m7G46) in tRNA. The protein is tRNA (guanine-N(7)-)-methyltransferase of Streptococcus pneumoniae (strain JJA).